Here is a 157-residue protein sequence, read N- to C-terminus: Small ribosomal subunit protein uS7 (157 aa).

This sequence belongs to the universal ribosomal protein uS7 family. Part of the 30S ribosomal subunit. Contacts proteins S9 and S11.

Its function is as follows. One of the primary rRNA binding proteins, it binds directly to 16S rRNA where it nucleates assembly of the head domain of the 30S subunit. Is located at the subunit interface close to the decoding center, probably blocks exit of the E-site tRNA. This chain is Small ribosomal subunit protein uS7, found in Chlamydia abortus (strain DSM 27085 / S26/3) (Chlamydophila abortus).